The chain runs to 335 residues: Tetraacyldisaccharide 4'-kinase (335 aa).

Residue Thr-58 to Thr-65 coordinates ATP.

Belongs to the LpxK family.

It catalyses the reaction a lipid A disaccharide + ATP = a lipid IVA + ADP + H(+). Its pathway is glycolipid biosynthesis; lipid IV(A) biosynthesis; lipid IV(A) from (3R)-3-hydroxytetradecanoyl-[acyl-carrier-protein] and UDP-N-acetyl-alpha-D-glucosamine: step 6/6. Its function is as follows. Transfers the gamma-phosphate of ATP to the 4'-position of a tetraacyldisaccharide 1-phosphate intermediate (termed DS-1-P) to form tetraacyldisaccharide 1,4'-bis-phosphate (lipid IVA). The sequence is that of Tetraacyldisaccharide 4'-kinase from Dichelobacter nodosus (strain VCS1703A).